Reading from the N-terminus, the 545-residue chain is Chaperonin GroEL (545 aa).

Residues 30–33 (TLGP), Lys-51, 87–91 (DGTTT), Gly-415, and Asp-496 each bind ATP.

The protein belongs to the chaperonin (HSP60) family. Forms a cylinder of 14 subunits composed of two heptameric rings stacked back-to-back. Interacts with the co-chaperonin GroES.

It localises to the cytoplasm. It carries out the reaction ATP + H2O + a folded polypeptide = ADP + phosphate + an unfolded polypeptide.. Together with its co-chaperonin GroES, plays an essential role in assisting protein folding. The GroEL-GroES system forms a nano-cage that allows encapsulation of the non-native substrate proteins and provides a physical environment optimized to promote and accelerate protein folding. This Rhodobacter capsulatus (Rhodopseudomonas capsulata) protein is Chaperonin GroEL.